Here is a 184-residue protein sequence, read N- to C-terminus: Holliday junction branch migration complex subunit RuvA (184 aa).

Positions 1 to 62 are domain I; that stretch reads MIVGLVGEVL…EDSESLYGFV (62 aa). The interval 63-134 is domain II; sequence DINEKKMFDR…ELGEFDISES (72 aa). The segment at 134-135 is flexible linker; that stretch reads SN. The domain III stretch occupies residues 136–184; the sequence is VTSSAFQEASMALQSLGFKKEQIQKALQECTATDTASLVKEALKKIQKL.

It belongs to the RuvA family. In terms of assembly, homotetramer. Forms an RuvA(8)-RuvB(12)-Holliday junction (HJ) complex. HJ DNA is sandwiched between 2 RuvA tetramers; dsDNA enters through RuvA and exits via RuvB. An RuvB hexamer assembles on each DNA strand where it exits the tetramer. Each RuvB hexamer is contacted by two RuvA subunits (via domain III) on 2 adjacent RuvB subunits; this complex drives branch migration. In the full resolvosome a probable DNA-RuvA(4)-RuvB(12)-RuvC(2) complex forms which resolves the HJ.

It is found in the cytoplasm. Functionally, the RuvA-RuvB-RuvC complex processes Holliday junction (HJ) DNA during genetic recombination and DNA repair, while the RuvA-RuvB complex plays an important role in the rescue of blocked DNA replication forks via replication fork reversal (RFR). RuvA specifically binds to HJ cruciform DNA, conferring on it an open structure. The RuvB hexamer acts as an ATP-dependent pump, pulling dsDNA into and through the RuvAB complex. HJ branch migration allows RuvC to scan DNA until it finds its consensus sequence, where it cleaves and resolves the cruciform DNA. This Nitratiruptor sp. (strain SB155-2) protein is Holliday junction branch migration complex subunit RuvA.